The primary structure comprises 321 residues: Hydropyrene synthase (321 aa).

The Mg(2+) site is built by Asp82, Asn225, Ser229, and Glu233. Positions 82–87 (DDRAID) match the DDxx(x)D/E motif motif. Positions 225-233 (NDLHSFARE) match the NDxxSxxxD/E motif motif.

The protein belongs to the terpene synthase family. The cofactor is Mg(2+).

The catalysed reaction is (2E,6E,10E)-geranylgeranyl diphosphate = hydropyrene + diphosphate. It catalyses the reaction (2E,6E,10E)-geranylgeranyl diphosphate + H2O = hydropyrenol + diphosphate. The enzyme catalyses (2E,6E,10E)-geranylgeranyl diphosphate = isoelisabethatriene + diphosphate. The protein operates within secondary metabolite biosynthesis; terpenoid biosynthesis. Terpene synthase that catalyzes the conversion of geranylgeranyl diphosphate (GGPP) into a mixture of diterpenes, including hydropyrene (HP), hydropyrenol (HPol), isoelisabethatriene and traces of isoelisabethatriene B. Hydropyrene is the main product. Some other diterpenoids are also produced in very low quantities. The protein is Hydropyrene synthase of Streptomyces clavuligerus.